A 186-amino-acid polypeptide reads, in one-letter code: Threonylcarbamoyl-AMP synthase (186 aa).

The region spanning 6-186 is the YrdC-like domain; the sequence is GFRLRLAANA…FDAMSGRRIR (181 aa).

It belongs to the SUA5 family. TsaC subfamily.

It localises to the cytoplasm. It carries out the reaction L-threonine + hydrogencarbonate + ATP = L-threonylcarbamoyladenylate + diphosphate + H2O. Its function is as follows. Required for the formation of a threonylcarbamoyl group on adenosine at position 37 (t(6)A37) in tRNAs that read codons beginning with adenine. Catalyzes the conversion of L-threonine, HCO(3)(-)/CO(2) and ATP to give threonylcarbamoyl-AMP (TC-AMP) as the acyladenylate intermediate, with the release of diphosphate. This is Threonylcarbamoyl-AMP synthase from Methylococcus capsulatus (strain ATCC 33009 / NCIMB 11132 / Bath).